Here is a 230-residue protein sequence, read N- to C-terminus: 2,3-bisphosphoglycerate-dependent phosphoglycerate mutase 1 (230 aa).

Residues 8–15 (RHGQSEWN), 21–22 (TG), R60, 87–90 (ERHY), K98, 114–115 (RR), and 183–184 (GN) contribute to the substrate site. H9 serves as the catalytic Tele-phosphohistidine intermediate. The active-site Proton donor/acceptor is the E87.

It belongs to the phosphoglycerate mutase family. BPG-dependent PGAM subfamily.

It catalyses the reaction (2R)-2-phosphoglycerate = (2R)-3-phosphoglycerate. The protein operates within carbohydrate degradation; glycolysis; pyruvate from D-glyceraldehyde 3-phosphate: step 3/5. In terms of biological role, catalyzes the interconversion of 2-phosphoglycerate and 3-phosphoglycerate. The chain is 2,3-bisphosphoglycerate-dependent phosphoglycerate mutase 1 from Lactobacillus johnsonii (strain CNCM I-12250 / La1 / NCC 533).